A 176-amino-acid chain; its full sequence is UBA-like domain-containing protein 1 (176 aa).

A disordered region spans residues 87–176 (SESFHGGGGS…RAHPAMEAER (90 aa)). A compositionally biased stretch (low complexity) spans 120–137 (TPSWPTAASPPGGPQQHQ). The segment covering 138–150 (PQPPLWTPAPPSP) has biased composition (pro residues). Positions 166–176 (PRAHPAMEAER) are enriched in basic and acidic residues.

This sequence belongs to the UBALD family.

This Mus musculus (Mouse) protein is UBA-like domain-containing protein 1 (Ubald1).